The primary structure comprises 103 residues: Large ribosomal subunit protein bL28 (103 aa).

This sequence belongs to the bacterial ribosomal protein bL28 family.

The sequence is that of Large ribosomal subunit protein bL28 from Anaplasma marginale (strain St. Maries).